The chain runs to 316 residues: 4-hydroxy-3-methylbut-2-enyl diphosphate reductase (316 aa).

C12 is a binding site for [4Fe-4S] cluster. (2E)-4-hydroxy-3-methylbut-2-enyl diphosphate contacts are provided by H41 and H74. Dimethylallyl diphosphate-binding residues include H41 and H74. Isopentenyl diphosphate is bound by residues H41 and H74. Position 96 (C96) interacts with [4Fe-4S] cluster. H124 lines the (2E)-4-hydroxy-3-methylbut-2-enyl diphosphate pocket. H124 is a binding site for dimethylallyl diphosphate. H124 is an isopentenyl diphosphate binding site. The active-site Proton donor is the E126. T169 is a binding site for (2E)-4-hydroxy-3-methylbut-2-enyl diphosphate. C199 lines the [4Fe-4S] cluster pocket. Positions 227, 228, 229, and 271 each coordinate (2E)-4-hydroxy-3-methylbut-2-enyl diphosphate. Dimethylallyl diphosphate contacts are provided by S227, S228, N229, and S271. S227, S228, N229, and S271 together coordinate isopentenyl diphosphate.

Belongs to the IspH family. [4Fe-4S] cluster is required as a cofactor.

The catalysed reaction is isopentenyl diphosphate + 2 oxidized [2Fe-2S]-[ferredoxin] + H2O = (2E)-4-hydroxy-3-methylbut-2-enyl diphosphate + 2 reduced [2Fe-2S]-[ferredoxin] + 2 H(+). It carries out the reaction dimethylallyl diphosphate + 2 oxidized [2Fe-2S]-[ferredoxin] + H2O = (2E)-4-hydroxy-3-methylbut-2-enyl diphosphate + 2 reduced [2Fe-2S]-[ferredoxin] + 2 H(+). It participates in isoprenoid biosynthesis; dimethylallyl diphosphate biosynthesis; dimethylallyl diphosphate from (2E)-4-hydroxy-3-methylbutenyl diphosphate: step 1/1. Its pathway is isoprenoid biosynthesis; isopentenyl diphosphate biosynthesis via DXP pathway; isopentenyl diphosphate from 1-deoxy-D-xylulose 5-phosphate: step 6/6. Catalyzes the conversion of 1-hydroxy-2-methyl-2-(E)-butenyl 4-diphosphate (HMBPP) into a mixture of isopentenyl diphosphate (IPP) and dimethylallyl diphosphate (DMAPP). Acts in the terminal step of the DOXP/MEP pathway for isoprenoid precursor biosynthesis. The chain is 4-hydroxy-3-methylbut-2-enyl diphosphate reductase from Xanthomonas axonopodis pv. citri (strain 306).